Reading from the N-terminus, the 156-residue chain is Small ribosomal subunit protein uS7 (156 aa).

Belongs to the universal ribosomal protein uS7 family. In terms of assembly, part of the 30S ribosomal subunit. Contacts proteins S9 and S11.

In terms of biological role, one of the primary rRNA binding proteins, it binds directly to 16S rRNA where it nucleates assembly of the head domain of the 30S subunit. Is located at the subunit interface close to the decoding center, probably blocks exit of the E-site tRNA. This Rhodospirillum rubrum (strain ATCC 11170 / ATH 1.1.1 / DSM 467 / LMG 4362 / NCIMB 8255 / S1) protein is Small ribosomal subunit protein uS7.